We begin with the raw amino-acid sequence, 433 residues long: Signal recognition particle 54 kDa protein (433 aa).

GTP-binding positions include 106–113, 186–190, and 244–247; these read GVEGSGKT, DTAGR, and TKMD.

This sequence belongs to the GTP-binding SRP family. SRP54 subfamily. As to quaternary structure, part of the signal recognition particle protein translocation system, which is composed of SRP and FtsY. Archaeal SRP consists of a 7S RNA molecule of 300 nucleotides and two protein subunits: SRP54 and SRP19.

The protein resides in the cytoplasm. It catalyses the reaction GTP + H2O = GDP + phosphate + H(+). Its function is as follows. Involved in targeting and insertion of nascent membrane proteins into the cytoplasmic membrane. Binds to the hydrophobic signal sequence of the ribosome-nascent chain (RNC) as it emerges from the ribosomes. The SRP-RNC complex is then targeted to the cytoplasmic membrane where it interacts with the SRP receptor FtsY. In Pyrobaculum arsenaticum (strain DSM 13514 / JCM 11321 / PZ6), this protein is Signal recognition particle 54 kDa protein.